Consider the following 448-residue polypeptide: Glutamyl-tRNA reductase 2 (448 aa).

Residues 50-53 (TCER), Ser109, 114-116 (ESD), and Gln120 each bind substrate. The active-site Nucleophile is Cys51. 190–195 (GTGQVA) is a binding site for NADP(+). Residues 423 to 448 (DQAVPAYSPQPIGNTSNAAASATPRR) form a disordered region. Over residues 433–442 (PIGNTSNAAA) the composition is skewed to polar residues.

Belongs to the glutamyl-tRNA reductase family. In terms of assembly, homodimer.

The catalysed reaction is (S)-4-amino-5-oxopentanoate + tRNA(Glu) + NADP(+) = L-glutamyl-tRNA(Glu) + NADPH + H(+). It participates in porphyrin-containing compound metabolism; protoporphyrin-IX biosynthesis; 5-aminolevulinate from L-glutamyl-tRNA(Glu): step 1/2. Catalyzes the NADPH-dependent reduction of glutamyl-tRNA(Glu) to glutamate 1-semialdehyde (GSA). This chain is Glutamyl-tRNA reductase 2, found in Nocardioides sp. (strain ATCC BAA-499 / JS614).